Here is a 72-residue protein sequence, read N- to C-terminus: Translation initiation factor IF-1 (72 aa).

The S1-like domain maps to 1–72 (MAKEDNIEMQ…SKGRIVFRSR (72 aa)).

It belongs to the IF-1 family. Component of the 30S ribosomal translation pre-initiation complex which assembles on the 30S ribosome in the order IF-2 and IF-3, IF-1 and N-formylmethionyl-tRNA(fMet); mRNA recruitment can occur at any time during PIC assembly.

It localises to the cytoplasm. In terms of biological role, one of the essential components for the initiation of protein synthesis. Stabilizes the binding of IF-2 and IF-3 on the 30S subunit to which N-formylmethionyl-tRNA(fMet) subsequently binds. Helps modulate mRNA selection, yielding the 30S pre-initiation complex (PIC). Upon addition of the 50S ribosomal subunit IF-1, IF-2 and IF-3 are released leaving the mature 70S translation initiation complex. This is Translation initiation factor IF-1 from Salmonella paratyphi A (strain ATCC 9150 / SARB42).